Reading from the N-terminus, the 90-residue chain is Small ribosomal subunit protein uS15c (90 aa).

It belongs to the universal ribosomal protein uS15 family. As to quaternary structure, part of the 30S ribosomal subunit.

The protein localises to the plastid. It localises to the chloroplast. In Citrus sinensis (Sweet orange), this protein is Small ribosomal subunit protein uS15c (rps15).